The primary structure comprises 206 residues: Guanylate kinase (206 aa).

In terms of domain architecture, Guanylate kinase-like spans 6 to 185; it reads GAILVLSGPS…AAKTLRIIAD (180 aa). 13 to 20 contacts ATP; that stretch reads GPSGAGKS.

The protein belongs to the guanylate kinase family.

It localises to the cytoplasm. It carries out the reaction GMP + ATP = GDP + ADP. Its function is as follows. Essential for recycling GMP and indirectly, cGMP. The sequence is that of Guanylate kinase from Sulfurimonas denitrificans (strain ATCC 33889 / DSM 1251) (Thiomicrospira denitrificans (strain ATCC 33889 / DSM 1251)).